The primary structure comprises 85 residues: Beta-insect depressant toxin LqhIT2 (85 aa).

Residues 1–21 (MKLLLLLIVSASMLIESLVNA) form the signal peptide. In terms of domain architecture, LCN-type CS-alpha/beta spans 22 to 82 (DGYIKRRDGC…TWKSETNTCG (61 aa)). Cystine bridges form between Cys31-Cys81, Cys35-Cys56, Cys42-Cys63, and Cys46-Cys65. At Gly82 the chain carries Glycine amide.

This sequence belongs to the long (4 C-C) scorpion toxin superfamily. Sodium channel inhibitor family. Beta subfamily. Expressed by the venom gland.

The protein localises to the secreted. Its function is as follows. Depressant insect beta-toxins cause a transient contraction paralysis followed by a slow flaccid paralysis. They bind voltage-independently at site-4 of sodium channels (Nav) and shift the voltage of activation toward more negative potentials thereby affecting sodium channel activation and promoting spontaneous and repetitive firing. This toxin is active only on insects. In Leiurus hebraeus (Hebrew deathstalker scorpion), this protein is Beta-insect depressant toxin LqhIT2.